Consider the following 411-residue polypeptide: Adenylosuccinate synthetase (411 aa).

GTP is bound by residues 11–17 (GDEGKGK) and 39–41 (GHT). The active-site Proton acceptor is Asp12. Asp12 and Gly39 together coordinate Mg(2+). Residues 12 to 15 (DEGK), 37 to 40 (NAGH), Thr121, Arg135, Gln215, Thr230, and Arg294 contribute to the IMP site. The active-site Proton donor is the His40. Substrate is bound at residue 290 to 296 (TTTKRPR). Residues Arg296, 322–324 (KLD), and 400–402 (STS) each bind GTP.

The protein belongs to the adenylosuccinate synthetase family. In terms of assembly, homodimer. The cofactor is Mg(2+).

Its subcellular location is the cytoplasm. The enzyme catalyses IMP + L-aspartate + GTP = N(6)-(1,2-dicarboxyethyl)-AMP + GDP + phosphate + 2 H(+). It functions in the pathway purine metabolism; AMP biosynthesis via de novo pathway; AMP from IMP: step 1/2. Plays an important role in the de novo pathway of purine nucleotide biosynthesis. Catalyzes the first committed step in the biosynthesis of AMP from IMP. The protein is Adenylosuccinate synthetase of Helicobacter pylori (strain ATCC 700392 / 26695) (Campylobacter pylori).